A 127-amino-acid chain; its full sequence is Fumarate reductase subunit C (127 aa).

The next 3 membrane-spanning stretches (helical) occupy residues 30-50 (ATVL…GSLV), 67-87 (VVIA…HTFF), and 107-127 (IIVL…LIVV).

The protein belongs to the FrdC family. Part of an enzyme complex containing four subunits: a flavoprotein (FrdA), an iron-sulfur protein (FrdB), and two hydrophobic anchor proteins (FrdC and FrdD).

The protein resides in the cell inner membrane. Its function is as follows. Anchors the catalytic components of the fumarate reductase complex to the cell membrane, binds quinones. The polypeptide is Fumarate reductase subunit C (Vibrio vulnificus (strain CMCP6)).